Consider the following 110-residue polypeptide: Protein RnfH (110 aa).

The tract at residues R86–R110 is disordered. Residues R88 to R110 are compositionally biased toward basic and acidic residues.

This sequence belongs to the UPF0125 (RnfH) family.

The protein is Protein RnfH of Paraburkholderia phymatum (strain DSM 17167 / CIP 108236 / LMG 21445 / STM815) (Burkholderia phymatum).